Reading from the N-terminus, the 543-residue chain is Probable protein kinase UbiB (543 aa).

Residues 123-501 form the Protein kinase domain; that stretch reads DFDIVPLASA…KRQQAKGQFL (379 aa). ATP-binding positions include 129–137 and Lys152; that span reads LASASIAQV. Asp287 functions as the Proton acceptor in the catalytic mechanism. Residues 517–539 traverse the membrane as a helical segment; the sequence is TSNITALASISAATGVTFWLLSW.

Belongs to the ABC1 family. UbiB subfamily.

The protein resides in the cell inner membrane. The protein operates within cofactor biosynthesis; ubiquinone biosynthesis [regulation]. In terms of biological role, is probably a protein kinase regulator of UbiI activity which is involved in aerobic coenzyme Q (ubiquinone) biosynthesis. This chain is Probable protein kinase UbiB, found in Aliivibrio salmonicida (strain LFI1238) (Vibrio salmonicida (strain LFI1238)).